Reading from the N-terminus, the 185-residue chain is Ribosome-recycling factor (185 aa).

Belongs to the RRF family.

The protein localises to the cytoplasm. Functionally, responsible for the release of ribosomes from messenger RNA at the termination of protein biosynthesis. May increase the efficiency of translation by recycling ribosomes from one round of translation to another. In Hydrogenovibrio crunogenus (strain DSM 25203 / XCL-2) (Thiomicrospira crunogena), this protein is Ribosome-recycling factor.